A 162-amino-acid chain; its full sequence is NADH-quinone oxidoreductase subunit I (162 aa).

4Fe-4S ferredoxin-type domains follow at residues 52–82 (LRRY…IEAG) and 93–122 (TRYD…EGPN). [4Fe-4S] cluster contacts are provided by Cys-62, Cys-65, Cys-68, Cys-72, Cys-102, Cys-105, Cys-108, and Cys-112.

It belongs to the complex I 23 kDa subunit family. As to quaternary structure, NDH-1 is composed of 14 different subunits. Subunits NuoA, H, J, K, L, M, N constitute the membrane sector of the complex. The cofactor is [4Fe-4S] cluster.

It is found in the cell inner membrane. It catalyses the reaction a quinone + NADH + 5 H(+)(in) = a quinol + NAD(+) + 4 H(+)(out). Functionally, NDH-1 shuttles electrons from NADH, via FMN and iron-sulfur (Fe-S) centers, to quinones in the respiratory chain. The immediate electron acceptor for the enzyme in this species is believed to be ubiquinone. Couples the redox reaction to proton translocation (for every two electrons transferred, four hydrogen ions are translocated across the cytoplasmic membrane), and thus conserves the redox energy in a proton gradient. The protein is NADH-quinone oxidoreductase subunit I of Methylobacterium nodulans (strain LMG 21967 / CNCM I-2342 / ORS 2060).